The primary structure comprises 704 residues: Capsule polysaccharide modification protein LipA (704 aa).

The protein localises to the cell inner membrane. In terms of biological role, involved in the phospholipid modification of the capsular polysaccharide, a strong requirement for its translocation to the cell surface. The polypeptide is Capsule polysaccharide modification protein LipA (lipA) (Neisseria meningitidis serogroup B (strain ATCC BAA-335 / MC58)).